Reading from the N-terminus, the 493-residue chain is Anthranilate synthase component 1 (493 aa).

Residues S48 and 273–275 contribute to the L-tryptophan site; that span reads PYM. 308-309 contacts chorismate; that stretch reads GT. E335 contacts Mg(2+). Chorismate contacts are provided by residues Y423, R443, 457-459, and G459; that span reads GGG. E472 provides a ligand contact to Mg(2+).

Belongs to the anthranilate synthase component I family. In terms of assembly, heterotetramer consisting of two non-identical subunits: a beta subunit (TrpG) and a large alpha subunit (TrpE). Mg(2+) serves as cofactor.

It carries out the reaction chorismate + L-glutamine = anthranilate + pyruvate + L-glutamate + H(+). The protein operates within amino-acid biosynthesis; L-tryptophan biosynthesis; L-tryptophan from chorismate: step 1/5. Its activity is regulated as follows. Feedback inhibited by tryptophan. Functionally, part of a heterotetrameric complex that catalyzes the two-step biosynthesis of anthranilate, an intermediate in the biosynthesis of L-tryptophan. In the first step, the glutamine-binding beta subunit (TrpG) of anthranilate synthase (AS) provides the glutamine amidotransferase activity which generates ammonia as a substrate that, along with chorismate, is used in the second step, catalyzed by the large alpha subunit of AS (TrpE) to produce anthranilate. In the absence of TrpG, TrpE can synthesize anthranilate directly from chorismate and high concentrations of ammonia. The sequence is that of Anthranilate synthase component 1 (trpE) from Pseudomonas putida (Arthrobacter siderocapsulatus).